We begin with the raw amino-acid sequence, 861 residues long: ToMV susceptible protein tm-2 (861 aa).

The stretch at 63 to 83 (VKNLLKDIQELAGDVEDLLDD) forms a coiled coil. An NB-ARC domain is found at 162 to 388 (DDFNMLQAKL…LESMGHKVQD (227 aa)). 185 to 192 (GMPGLGKT) contributes to the ATP binding site. LRR repeat units follow at residues 225–248 (LDIA…NLRS), 305–327 (LHAL…IFNF), 388–411 (DGCA…CFLY), 449–472 (LAED…TYNG), 510–536 (VARL…KLEK), 585–608 (MTCL…IVKL), 609–631 (TRLE…VWES), 652–680 (ISSF…FFEP), 689–713 (LRKL…PVPK), 735–758 (YPKI…AFPP), 781–804 (LPKL…LSGE), and 810–835 (FPQL…DVSM).

This sequence belongs to the disease resistance NB-LRR family. In terms of assembly, (Microbial infection) Fails to interact with the tobamovirus mouvement protein of tobacco mosaic virus (TMV).

It localises to the cell membrane. In terms of biological role, potential inhibitor of viral mouvements which may confer resistance to some tobamoviruses but not to the tomato mosaic virus (ToMV) and tobacco mosaic virus (TMV). The protein is ToMV susceptible protein tm-2 of Solanum lycopersicum (Tomato).